The sequence spans 173 residues: MSKHTNIPMFRIGIGYDVHRFDNINNDDSNTSITICGIEINYHKKIIAHSDGDVGLHALADAILGAVGCGSIGQHFPNTDQKWKNAKSSHFVIEAQKKAQERGYIISNADIIIICEQPKIMPYALEMQHYIAQFTSIDPSFINIKATTTEKLGAIGRNEGIAAQAIVLCSQQY.

A divalent metal cation-binding residues include D17 and H19. 4-CDP-2-C-methyl-D-erythritol 2-phosphate-binding positions include D17 to H19 and H49 to S50. Residue H57 participates in a divalent metal cation binding. Residues F76–D80, T147–E150, and R157 each bind 4-CDP-2-C-methyl-D-erythritol 2-phosphate.

It belongs to the IspF family. Homotrimer. A divalent metal cation serves as cofactor.

The catalysed reaction is 4-CDP-2-C-methyl-D-erythritol 2-phosphate = 2-C-methyl-D-erythritol 2,4-cyclic diphosphate + CMP. It functions in the pathway isoprenoid biosynthesis; isopentenyl diphosphate biosynthesis via DXP pathway; isopentenyl diphosphate from 1-deoxy-D-xylulose 5-phosphate: step 4/6. Its function is as follows. Involved in the biosynthesis of isopentenyl diphosphate (IPP) and dimethylallyl diphosphate (DMAPP), two major building blocks of isoprenoid compounds. Catalyzes the conversion of 4-diphosphocytidyl-2-C-methyl-D-erythritol 2-phosphate (CDP-ME2P) to 2-C-methyl-D-erythritol 2,4-cyclodiphosphate (ME-CPP) with a corresponding release of cytidine 5-monophosphate (CMP). This is 2-C-methyl-D-erythritol 2,4-cyclodiphosphate synthase from Ehrlichia ruminantium (strain Gardel).